We begin with the raw amino-acid sequence, 242 residues long: Type III pantothenate kinase (242 aa).

7-14 (DNSNTRTK) is an ATP binding site. Residues Tyr-88 and 95-98 (GADR) each bind substrate. Residue Asp-97 is the Proton acceptor of the active site. K(+) is bound at residue Asp-117. Thr-120 contributes to the ATP binding site. Thr-172 is a binding site for substrate.

It belongs to the type III pantothenate kinase family. As to quaternary structure, homodimer. The cofactor is NH4(+). K(+) is required as a cofactor.

It is found in the cytoplasm. It catalyses the reaction (R)-pantothenate + ATP = (R)-4'-phosphopantothenate + ADP + H(+). The protein operates within cofactor biosynthesis; coenzyme A biosynthesis; CoA from (R)-pantothenate: step 1/5. In terms of biological role, catalyzes the phosphorylation of pantothenate (Pan), the first step in CoA biosynthesis. The polypeptide is Type III pantothenate kinase (Akkermansia muciniphila (strain ATCC BAA-835 / DSM 22959 / JCM 33894 / BCRC 81048 / CCUG 64013 / CIP 107961 / Muc)).